The primary structure comprises 467 residues: Fumarate hydratase class II (467 aa).

Substrate contacts are provided by residues 98–100, R126, 129–132, 139–141, and T187; these read SGT, HPND, and SSN. The active-site Proton donor/acceptor is H188. S318 is an active-site residue. Substrate is bound by residues S319 and 324–326; that span reads KVN.

The protein belongs to the class-II fumarase/aspartase family. Fumarase subfamily. In terms of assembly, homotetramer.

It is found in the cytoplasm. The enzyme catalyses (S)-malate = fumarate + H2O. It participates in carbohydrate metabolism; tricarboxylic acid cycle; (S)-malate from fumarate: step 1/1. In terms of biological role, involved in the TCA cycle. Catalyzes the stereospecific interconversion of fumarate to L-malate. The protein is Fumarate hydratase class II of Shigella flexneri.